A 409-amino-acid polypeptide reads, in one-letter code: Nucleoprotein (409 aa).

Disordered stretches follow at residues 1–32 (MASG…SSGN), 47–84 (PQPK…KSGR), 121–145 (ADTK…LRFS), and 164–194 (RSGR…GAED). An RNA-binding region spans residues 29–160 (SSGNASWFQA…GNFRWDFIPL (132 aa)). Residues 31-156 (GNASWFQAIK…GGPDGNFRWD (126 aa)) enclose the CoV N NTD domain. The segment covering 57-68 (PDNNNIKPSQQH) has biased composition (polar residues). A compositionally biased stretch (basic residues) spans 70 to 84 (YWRRQARYKPGKSGR). Positions 164 to 179 (RSGRSTAASSAASSRA) are enriched in low complexity. Residues 180–192 (PSREGSRGRRSGA) are compositionally biased toward basic and acidic residues. S190 carries the post-translational modification Phosphoserine; by host. Residues 215–331 (TKAKADEMAH…QCVDGVGTRP (117 aa)) form the CoV N CTD domain. A dimerization region spans residues 226 to 333 (RYCKRTIPPG…VDGVGTRPKD (108 aa)). A disulfide bridge links C320 with C323. A disordered region spans residues 326–409 (GVGTRPKDDE…GDSALGENEL (84 aa)). Residues 358 to 367 (QRPKKEKKPK) are compositionally biased toward basic residues. Residues 368-384 (KQDDEVDKALTSDEERN) show a composition bias toward basic and acidic residues. T378 carries the post-translational modification Phosphothreonine; by host. A Phosphoserine; by host modification is found at S379.

This sequence belongs to the gammacoronavirus nucleocapsid protein family. Homooligomer. Both monomeric and oligomeric forms interact with RNA. Interacts with protein M. Interacts with NSP3; this interaction serves to tether the genome to the newly translated replicase-transcriptase complex at a very early stage of infection. In terms of processing, ADP-ribosylated. The ADP-ribosylation is retained in the virion during infection. Post-translationally, phosphorylated on serine and threonine residues.

It localises to the virion. Its subcellular location is the host endoplasmic reticulum-Golgi intermediate compartment. The protein localises to the host Golgi apparatus. Its function is as follows. Packages the positive strand viral genome RNA into a helical ribonucleocapsid (RNP) and plays a fundamental role during virion assembly through its interactions with the viral genome and membrane protein M. Plays an important role in enhancing the efficiency of subgenomic viral RNA transcription as well as viral replication. This is Nucleoprotein from Gallus gallus (Chicken).